The primary structure comprises 1369 residues: DNA-directed RNA polymerase subunit beta (1369 aa).

This sequence belongs to the RNA polymerase beta chain family. The RNAP catalytic core consists of 2 alpha, 1 beta, 1 beta' and 1 omega subunit. When a sigma factor is associated with the core the holoenzyme is formed, which can initiate transcription.

The enzyme catalyses RNA(n) + a ribonucleoside 5'-triphosphate = RNA(n+1) + diphosphate. Functionally, DNA-dependent RNA polymerase catalyzes the transcription of DNA into RNA using the four ribonucleoside triphosphates as substrates. This is DNA-directed RNA polymerase subunit beta from Solidesulfovibrio magneticus (strain ATCC 700980 / DSM 13731 / RS-1) (Desulfovibrio magneticus).